Consider the following 634-residue polypeptide: Threonine--tRNA ligase (634 aa).

One can recognise a TGS domain in the interval 1-61; the sequence is MINIRFPDGS…NSNCELRLIT (61 aa). Residues 241–532 form a catalytic region; the sequence is DHRKIGKVLD…LIEHYAGNLP (292 aa). 3 residues coordinate Zn(2+): Cys332, His383, and His509.

It belongs to the class-II aminoacyl-tRNA synthetase family. As to quaternary structure, homodimer. Zn(2+) is required as a cofactor.

It is found in the cytoplasm. The catalysed reaction is tRNA(Thr) + L-threonine + ATP = L-threonyl-tRNA(Thr) + AMP + diphosphate + H(+). In terms of biological role, catalyzes the attachment of threonine to tRNA(Thr) in a two-step reaction: L-threonine is first activated by ATP to form Thr-AMP and then transferred to the acceptor end of tRNA(Thr). Also edits incorrectly charged L-seryl-tRNA(Thr). The chain is Threonine--tRNA ligase from Francisella tularensis subsp. holarctica (strain FTNF002-00 / FTA).